Here is a 61-residue protein sequence, read N- to C-terminus: Large ribosomal subunit protein uL30 (61 aa).

This sequence belongs to the universal ribosomal protein uL30 family. In terms of assembly, part of the 50S ribosomal subunit.

This chain is Large ribosomal subunit protein uL30, found in Chlorobium phaeovibrioides (strain DSM 265 / 1930) (Prosthecochloris vibrioformis (strain DSM 265)).